The chain runs to 227 residues: Large ribosomal subunit protein uL3 (227 aa).

The disordered stretch occupies residues 146–167 (RGPMAHGSKFHRHQGSNGACSS).

The protein belongs to the universal ribosomal protein uL3 family. As to quaternary structure, part of the 50S ribosomal subunit. Forms a cluster with proteins L14 and L19.

Functionally, one of the primary rRNA binding proteins, it binds directly near the 3'-end of the 23S rRNA, where it nucleates assembly of the 50S subunit. This is Large ribosomal subunit protein uL3 from Agathobacter rectalis (strain ATCC 33656 / DSM 3377 / JCM 17463 / KCTC 5835 / VPI 0990) (Eubacterium rectale).